Reading from the N-terminus, the 410-residue chain is 2-hydroxy-5-methyl-1-naphthoate 7-hydroxylase (410 aa).

Position 350 (C350) interacts with heme.

It belongs to the cytochrome P450 family. It depends on heme as a cofactor.

The enzyme catalyses 2-hydroxy-5-methyl-1-naphthoate + 2 reduced [2Fe-2S]-[ferredoxin] + O2 + 2 H(+) = 2,7-dihydroxy-5-methyl-1-naphthoate + 2 oxidized [2Fe-2S]-[ferredoxin] + H2O. It participates in antibiotic biosynthesis. Involved in the biosynthesis of the naphthoic acid (NA) moiety in the chromophore of the enedyine antitumor antibiotic neocarzinostatin (NCS). Catalyzes the hydroxylation at C-7 position of 2-hydroxy-5-methyl-1-naphthoate to yield 2,7-dihydroxy-5-methyl-1-naphthoate. The protein is 2-hydroxy-5-methyl-1-naphthoate 7-hydroxylase of Streptomyces carzinostaticus.